The primary structure comprises 721 residues: Putative cullin-like protein 1 (721 aa).

The region spanning 651-713 (DRRYAIDAAL…RDYLERDTEN (63 aa)) is the Cullin neddylation domain.

This sequence belongs to the cullin family.

The polypeptide is Putative cullin-like protein 1 (Arabidopsis thaliana (Mouse-ear cress)).